The sequence spans 3147 residues: Bassianolide nonribosomal cyclodepsipeptide synthetase (3147 aa).

The segment covering 1 to 12 (MEPPNNANTGQL) has biased composition (polar residues). The tract at residues 1 to 23 (MEPPNNANTGQLGPTLPNGTVDL) is disordered. The condensation 1 stretch occupies residues 69–454 (HVVYEIPEDV…INKLQSTDGS (386 aa)). An adenylation 1 region spans residues 495-887 (DDTPNKPAVC…GRMDSQVKIR (393 aa)). The Carrier 1 domain maps to 1015-1091 (PDASAGVTKL…SLQAAIGGSS (77 aa)). Ser1052 carries the O-(pantetheine 4'-phosphoryl)serine modification. The tract at residues 1109–1538 (SYSQGRLWFL…QTLISVVPLT (430 aa)) is condensation 2. The segment at 1567-1973 (FATQVASYPD…GRMDFQFKIR (407 aa)) is adenylation 2. Positions 2041–2181 (TYTELDTVSS…FPTRDYLEQV (141 aa)) are S-adenosyl-L-methionine-dependent N-methyltransferase (MT). Carrier domains are found at residues 2515–2589 (FPLS…RQQL) and 2615–2689 (APTT…EVSQ). An O-(pantetheine 4'-phosphoryl)serine mark is found at Ser2549 and Ser2649. Residues 2735–3139 (QDVYLATHLQ…THLMEQVCNT (405 aa)) form a condensation 3 region.

The protein belongs to the NRP synthetase family.

Functionally, bassianolide nonribosomal synthetase that mediates the biosynthesis of bassianolide (BSL), a non-ribosomal cyclodepsipeptide that shows insecticidal and cancer cell antiproliferative activity. BSLS first catalyzes the iterative synthesis of an enzyme-bound dipeptidol monomer intermediate from D-2-hydroxyisovalerate and L-leucine before performing the condensation and cyclization of 4 dipeptidol monomers to yield the cyclic tetrameric ester bassianolide. The N-methyltransferase MT domain is responsible for the methylation of the leucine residues of bassianolide. BSLS is flexible with both the amino acid and hydroxyl acid precursors, and produces bassianolide as the major product (containing N-methyl-L-Leu), together with small amounts of beauvericin and its analogs beauvericins A-C (containing N-methyl-L-Phe). In Beauveria bassiana (strain ARSEF 2860) (White muscardine disease fungus), this protein is Bassianolide nonribosomal cyclodepsipeptide synthetase.